We begin with the raw amino-acid sequence, 493 residues long: Keratin, type II cuticular Hb3 (493 aa).

Residues 1 to 111 are head; the sequence is MTCGFNSIGC…PNAQCVKQEE (111 aa). The IF rod domain occupies 111 to 422; sequence EKEQIKSLNS…RLLEGEEQRL (312 aa). A coil 1A region spans residues 112–146; that stretch reads KEQIKSLNSRFAAFIDKVRFLEQQNKLLETKLQFY. A linker 1 region spans residues 147 to 156; it reads QNRECCQSNL. The tract at residues 157–257 is coil 1B; it reads EPLFAGYIET…YEEEIRILQS (101 aa). A Glycyl lysine isopeptide (Lys-Gly) (interchain with G-Cter in SUMO1) cross-link involves residue Lys217. A linker 12 region spans residues 258-274; the sequence is HISDTSVVVKLDNSRDL. The interval 275 to 418 is coil 2; that stretch reads NMDCIVAEIK…ATYRRLLEGE (144 aa). Residues 419 to 493 form a tail region; it reads EQRLCEGVEA…GGGSCGQGRH (75 aa).

The protein belongs to the intermediate filament family. As to quaternary structure, heterotetramer of two type I and two type II keratins. Synthesis begins in the cortex 10-15 cell layers above the apex of the dermal papilla and ends abruptly in the middle of the cortex.

This is Keratin, type II cuticular Hb3 (KRT83) from Homo sapiens (Human).